The sequence spans 226 residues: Ribosomal RNA small subunit methyltransferase G (226 aa).

Residues G86, L91, 137 to 138 (VE), and R150 contribute to the S-adenosyl-L-methionine site.

The protein belongs to the methyltransferase superfamily. RNA methyltransferase RsmG family.

Its subcellular location is the cytoplasm. The enzyme catalyses guanosine(527) in 16S rRNA + S-adenosyl-L-methionine = N(7)-methylguanosine(527) in 16S rRNA + S-adenosyl-L-homocysteine. Its function is as follows. Specifically methylates the N7 position of guanine in position 527 of 16S rRNA. The sequence is that of Ribosomal RNA small subunit methyltransferase G from Polaromonas sp. (strain JS666 / ATCC BAA-500).